We begin with the raw amino-acid sequence, 87 residues long: Small ribosomal subunit protein bS20 (87 aa).

The interval 1-20 (MANIKSQIKRNKTNEKARLR) is disordered.

This sequence belongs to the bacterial ribosomal protein bS20 family.

Its function is as follows. Binds directly to 16S ribosomal RNA. This chain is Small ribosomal subunit protein bS20, found in Corynebacterium efficiens (strain DSM 44549 / YS-314 / AJ 12310 / JCM 11189 / NBRC 100395).